The following is a 208-amino-acid chain: Protein IncB (208 aa).

Functionally, this protein is thought to be cis acting and to contain the putative attachment site on the DNA for the cellular partition apparatus. The chain is Protein IncB (incB) from Escherichia coli.